The sequence spans 121 residues: MAKYRAGRINEEVKKAISSIIQNDIRDPRLTSMISVIKVDVTKDLRYAKAYVSILGDEAKKKETMDILKKSESFIRKELGYAVKLRYTPEVIIELDTSIEKGMHIDAILEKIKGSDKNDNR.

This sequence belongs to the RbfA family. Monomer. Binds 30S ribosomal subunits, but not 50S ribosomal subunits or 70S ribosomes.

The protein resides in the cytoplasm. In terms of biological role, one of several proteins that assist in the late maturation steps of the functional core of the 30S ribosomal subunit. Associates with free 30S ribosomal subunits (but not with 30S subunits that are part of 70S ribosomes or polysomes). Required for efficient processing of 16S rRNA. May interact with the 5'-terminal helix region of 16S rRNA. This is Ribosome-binding factor A from Clostridium acetobutylicum (strain ATCC 824 / DSM 792 / JCM 1419 / IAM 19013 / LMG 5710 / NBRC 13948 / NRRL B-527 / VKM B-1787 / 2291 / W).